Reading from the N-terminus, the 463-residue chain is Argininosuccinate lyase (463 aa).

Residues S27, N115, and T161 each contribute to the 2-(N(omega)-L-arginino)succinate site. Catalysis depends on H162, which acts as the Proton acceptor. The active-site Proton donor is the S283. 2-(N(omega)-L-arginino)succinate contacts are provided by N291, Y323, Q328, and K331.

The protein belongs to the lyase 1 family. Argininosuccinate lyase subfamily. In terms of assembly, homotetramer.

It carries out the reaction 2-(N(omega)-L-arginino)succinate = fumarate + L-arginine. The protein operates within amino-acid biosynthesis; L-arginine biosynthesis; L-arginine from L-ornithine and carbamoyl phosphate: step 3/3. The polypeptide is Argininosuccinate lyase (ARG4) (Saccharomyces paradoxus (Yeast)).